The chain runs to 321 residues: Glycerol-3-phosphate dehydrogenase [NAD(P)+] (321 aa).

NADPH is bound by residues tryptophan 15, arginine 35, and lysine 101. Sn-glycerol 3-phosphate-binding residues include lysine 101 and glycine 129. NADPH is bound at residue alanine 133. Lysine 184, aspartate 237, serine 247, arginine 248, and asparagine 249 together coordinate sn-glycerol 3-phosphate. Lysine 184 functions as the Proton acceptor in the catalytic mechanism. Arginine 248 contacts NADPH. Residues valine 268 and glutamate 270 each contribute to the NADPH site.

It belongs to the NAD-dependent glycerol-3-phosphate dehydrogenase family.

Its subcellular location is the cytoplasm. It carries out the reaction sn-glycerol 3-phosphate + NAD(+) = dihydroxyacetone phosphate + NADH + H(+). It catalyses the reaction sn-glycerol 3-phosphate + NADP(+) = dihydroxyacetone phosphate + NADPH + H(+). It functions in the pathway membrane lipid metabolism; glycerophospholipid metabolism. In terms of biological role, catalyzes the reduction of the glycolytic intermediate dihydroxyacetone phosphate (DHAP) to sn-glycerol 3-phosphate (G3P), the key precursor for phospholipid synthesis. The protein is Glycerol-3-phosphate dehydrogenase [NAD(P)+] of Acidiphilium cryptum (strain JF-5).